A 424-amino-acid polypeptide reads, in one-letter code: Serine--tRNA ligase (424 aa).

229 to 231 (TAE) provides a ligand contact to L-serine. ATP is bound at residue 260-262 (RSE). Glu283 provides a ligand contact to L-serine. 347–350 (EISS) is a binding site for ATP. Ser383 contributes to the L-serine binding site.

The protein belongs to the class-II aminoacyl-tRNA synthetase family. Type-1 seryl-tRNA synthetase subfamily. In terms of assembly, homodimer. The tRNA molecule binds across the dimer.

The protein resides in the cytoplasm. The enzyme catalyses tRNA(Ser) + L-serine + ATP = L-seryl-tRNA(Ser) + AMP + diphosphate + H(+). It carries out the reaction tRNA(Sec) + L-serine + ATP = L-seryl-tRNA(Sec) + AMP + diphosphate + H(+). The protein operates within aminoacyl-tRNA biosynthesis; selenocysteinyl-tRNA(Sec) biosynthesis; L-seryl-tRNA(Sec) from L-serine and tRNA(Sec): step 1/1. Its function is as follows. Catalyzes the attachment of serine to tRNA(Ser). Is also able to aminoacylate tRNA(Sec) with serine, to form the misacylated tRNA L-seryl-tRNA(Sec), which will be further converted into selenocysteinyl-tRNA(Sec). In Gluconacetobacter diazotrophicus (strain ATCC 49037 / DSM 5601 / CCUG 37298 / CIP 103539 / LMG 7603 / PAl5), this protein is Serine--tRNA ligase.